The primary structure comprises 624 residues: tRNA uridine 5-carboxymethylaminomethyl modification enzyme MnmG (624 aa).

FAD is bound by residues 13–18, V125, and S180; that span reads GAGHAG. 272-286 lines the NAD(+) pocket; sequence GPRYCPSIEDKVVKF. An FAD-binding site is contributed by Q369.

This sequence belongs to the MnmG family. As to quaternary structure, homodimer. Heterotetramer of two MnmE and two MnmG subunits. The cofactor is FAD.

It localises to the cytoplasm. Its function is as follows. NAD-binding protein involved in the addition of a carboxymethylaminomethyl (cmnm) group at the wobble position (U34) of certain tRNAs, forming tRNA-cmnm(5)s(2)U34. The sequence is that of tRNA uridine 5-carboxymethylaminomethyl modification enzyme MnmG from Thermodesulfovibrio yellowstonii (strain ATCC 51303 / DSM 11347 / YP87).